A 966-amino-acid chain; its full sequence is Mitogen-activated protein kinase kinase kinase 13 (966 aa).

Disordered regions lie at residues 1-22, 30-49, and 90-114; these read MANF…SESK, ELTA…QQEK, and HDES…SGTE. A compositionally biased stretch (polar residues) spans 95-113; it reads TAVSQGNSNTVDGESTSGT. Positions 168–409 constitute a Protein kinase domain; sequence ISELQWLGSG…FRQTLMHLDI (242 aa). ATP-binding positions include 174–182 and K195; that span reads LGSGAQGAV. D279 serves as the catalytic Proton acceptor. Leucine-zipper stretches follow at residues 433 to 454 and 486 to 507; these read VKKH…DEEL and LSAI…EQAV. Disordered regions lie at residues 534 to 599, 611 to 655, 744 to 834, and 846 to 908; these read KRKG…RGSH, AQEN…HHPR, DIPS…RRQR, and STFS…GLSD. Positions 567–581 are enriched in low complexity; that stretch reads SPLSGSPKMSTSSSK. The segment covering 582–594 has biased composition (basic residues); sequence SRYRSKPRHRRGN. 2 stretches are compositionally biased toward polar residues: residues 611–629 and 785–795; these read AQEN…SQYP and RSESSLGTSHL. Residues 814–827 are compositionally biased toward acidic residues; that stretch reads DSSEEEEGEVDSEV. Residues 815–828 form an acidic region; sequence SSEEEEGEVDSEVE. Polar residues predominate over residues 846–855; it reads STFSSENFSV. Positions 873-887 are enriched in basic and acidic residues; the sequence is LADKLEDRLAEKLDD.

The protein belongs to the protein kinase superfamily. STE Ser/Thr protein kinase family. MAP kinase kinase kinase subfamily. As to quaternary structure, homodimer; forms dimers through the leucine-zipper motif. Interacts with the C-terminus of MAPK8IP1 through the kinase catalytic domain. Binds PRDX3. Associates with the IKK complex through the kinase domain. Mg(2+) serves as cofactor. Autophosphorylated on serine and threonine residues. As to expression, expressed in the adult brain, liver, placenta and pancreas, with expression strongest in the pancreas.

It localises to the cytoplasm. Its subcellular location is the membrane. It carries out the reaction L-seryl-[protein] + ATP = O-phospho-L-seryl-[protein] + ADP + H(+). The catalysed reaction is L-threonyl-[protein] + ATP = O-phospho-L-threonyl-[protein] + ADP + H(+). Activated by autophosphorylation and homodimerization. In terms of biological role, activates the JUN N-terminal pathway through activation of the MAP kinase kinase MAP2K7. Acts synergistically with PRDX3 to regulate the activation of NF-kappa-B in the cytosol. This activation is kinase-dependent and involves activating the IKK complex, the IKBKB-containing complex that phosphorylates inhibitors of NF-kappa-B. The polypeptide is Mitogen-activated protein kinase kinase kinase 13 (Homo sapiens (Human)).